A 499-amino-acid polypeptide reads, in one-letter code: MKEFQVYLELDRSRQHDFLYPLIFREYIYALAYDHGLNSSILVENLGYDNKSSLLIVKRLITRMYQQNHLILSANDSNKNQFLGYNKNLYSQIISEGFAVSVEIPFSLQLISSLEEEEIVKSYNLRSIHSIFPFFEDKFPYLNYVSDVRIPYPIHLEILVQTLRYWVKDASSFHLLRLFLYEYFNWNSLITPKKWISTFSQSNPRLFLFLYNFYVCEYESIFIFLRKKSSYLRLTSSGVLFERIYFYAKIEHRVEVLDKDFPSTLWFFKDPFIHYVRYKGKSILSSKNTPFFMNKWKYYLIHLWQCHFYVWSQPGKIHINQLSEHSFYFLGYFSNVRLNPSVVRSQMLENSFIIENVMKKLDTIIPIIPLIRSLAKANFCNVLGHPISKPVWADSSDFDIIDRFLRICRNLSHYYNGSSKKKSLYRIKYILRLSCIKTLARKHKSTVRVFLKRLGSEVLEEFFTEEEEILSLILPRASSTLQRLYRGRIWYLDIFYFHQ.

The protein belongs to the intron maturase 2 family. MatK subfamily.

It localises to the plastid. The protein resides in the chloroplast. Functionally, usually encoded in the trnK tRNA gene intron. Probably assists in splicing its own and other chloroplast group II introns. The protein is Maturase K of Gymnocladus chinensis (Soap tree).